The sequence spans 103 residues: Large ribosomal subunit protein bL21 (103 aa).

This sequence belongs to the bacterial ribosomal protein bL21 family. As to quaternary structure, part of the 50S ribosomal subunit. Contacts protein L20.

Functionally, this protein binds to 23S rRNA in the presence of protein L20. This Desulfitobacterium hafniense (strain DSM 10664 / DCB-2) protein is Large ribosomal subunit protein bL21.